Here is a 190-residue protein sequence, read N- to C-terminus: UPF0301 protein Reut_A0705 (190 aa).

It belongs to the UPF0301 (AlgH) family.

In Cupriavidus pinatubonensis (strain JMP 134 / LMG 1197) (Cupriavidus necator (strain JMP 134)), this protein is UPF0301 protein Reut_A0705.